A 164-amino-acid chain; its full sequence is MYRVRVFGDPVLRKRAKPVTKFDEALKRTIERMIETMYHYDGVGLAAPQVGISQRFFVMDVGNGPVAVINPEILEASPETEIAEEGCLSFPEIFVEIERSKRVKVRYQNVRGEFVEEELEGYPARVFQHEFDHLNGVLIIDRIKPAKRLLLRKRLMDIAKSARG.

Positions 87 and 129 each coordinate Fe cation. E130 is an active-site residue. H133 provides a ligand contact to Fe cation.

Belongs to the polypeptide deformylase family. It depends on Fe(2+) as a cofactor.

The enzyme catalyses N-terminal N-formyl-L-methionyl-[peptide] + H2O = N-terminal L-methionyl-[peptide] + formate. In terms of biological role, removes the formyl group from the N-terminal Met of newly synthesized proteins. Requires at least a dipeptide for an efficient rate of reaction. N-terminal L-methionine is a prerequisite for activity but the enzyme has broad specificity at other positions. This Thermotoga neapolitana (strain ATCC 49049 / DSM 4359 / NBRC 107923 / NS-E) protein is Peptide deformylase.